A 115-amino-acid chain; its full sequence is U3-lycotoxin-Ls1a (115 aa).

The signal sequence occupies residues 1–20 (MKFVLLFGVLLLTLFSYSSA). Residues 21–44 (EMLDDFDQADEDELLSLIEKEEAR) constitute a propeptide that is removed on maturation. 4 disulfides stabilise this stretch: cysteine 48-cysteine 63, cysteine 55-cysteine 72, cysteine 62-cysteine 87, and cysteine 74-cysteine 85.

Belongs to the neurotoxin 19 (CSTX) family. 01 subfamily. As to expression, expressed by the venom gland.

The protein resides in the secreted. The polypeptide is U3-lycotoxin-Ls1a (Lycosa singoriensis (Wolf spider)).